The primary structure comprises 324 residues: Delta-aminolevulinic acid dehydratase (324 aa).

Positions 118, 120, and 128 each coordinate Zn(2+). Lys195 acts as the Schiff-base intermediate with substrate in catalysis. 5-aminolevulinate-binding residues include Arg205 and Arg217. A Mg(2+)-binding site is contributed by Glu233. Residue Lys248 is the Schiff-base intermediate with substrate of the active site. 2 residues coordinate 5-aminolevulinate: Ser274 and Tyr313.

Belongs to the ALAD family. Homooctamer. The cofactor is Zn(2+).

The catalysed reaction is 2 5-aminolevulinate = porphobilinogen + 2 H2O + H(+). Its pathway is porphyrin-containing compound metabolism; protoporphyrin-IX biosynthesis; coproporphyrinogen-III from 5-aminolevulinate: step 1/4. Functionally, catalyzes an early step in the biosynthesis of tetrapyrroles. Binds two molecules of 5-aminolevulinate per subunit, each at a distinct site, and catalyzes their condensation to form porphobilinogen. The chain is Delta-aminolevulinic acid dehydratase (hemB) from Staphylococcus aureus (strain NCTC 8325 / PS 47).